We begin with the raw amino-acid sequence, 535 residues long: Probable bifunctional tRNA threonylcarbamoyladenosine biosynthesis protein (535 aa).

The segment at 1 to 323 is kae1; the sequence is MICLGLEGTA…YRTDMVEVNW (323 aa). Residues H106, H110, and Y127 each coordinate Fe cation. L-threonylcarbamoyladenylate-binding positions include 127–131, D159, G172, E176, and N256; that span reads YVSGG. D284 serves as a coordination point for Fe cation. In terms of domain architecture, Protein kinase spans 333-535; that stretch reads KIPEHLIGKG…DVERRARYVE (203 aa). ATP contacts are provided by residues 339-347 and K360; that span reads IGKGAEADI. D451 serves as the catalytic Proton acceptor; for kinase activity.

In the N-terminal section; belongs to the KAE1 / TsaD family. It in the C-terminal section; belongs to the protein kinase superfamily. Tyr protein kinase family. BUD32 subfamily. Component of the KEOPS complex that consists of Kae1, Bud32, Cgi121 and Pcc1; the whole complex dimerizes. The cofactor is Fe(2+).

Its subcellular location is the cytoplasm. It catalyses the reaction L-seryl-[protein] + ATP = O-phospho-L-seryl-[protein] + ADP + H(+). The catalysed reaction is L-threonyl-[protein] + ATP = O-phospho-L-threonyl-[protein] + ADP + H(+). The enzyme catalyses L-threonylcarbamoyladenylate + adenosine(37) in tRNA = N(6)-L-threonylcarbamoyladenosine(37) in tRNA + AMP + H(+). With respect to regulation, activity provided by the Kae1 region seems to be regulated via phosphorylation by the protein kinase Bud32, which is itself activated by Cgi121. Required for the formation of a threonylcarbamoyl group on adenosine at position 37 (t(6)A37) in tRNAs that read codons beginning with adenine. Is a component of the KEOPS complex that is probably involved in the transfer of the threonylcarbamoyl moiety of threonylcarbamoyl-AMP (TC-AMP) to the N6 group of A37. The Kae1 domain likely plays a direct catalytic role in this reaction. The Bud32 domain probably displays kinase activity that regulates Kae1 function. In vitro, exhibits low ATPase activity, but does not bind DNA and does not have endonuclease activity. This is Probable bifunctional tRNA threonylcarbamoyladenosine biosynthesis protein from Methanocaldococcus jannaschii (strain ATCC 43067 / DSM 2661 / JAL-1 / JCM 10045 / NBRC 100440) (Methanococcus jannaschii).